Consider the following 720-residue polypeptide: Receptor-like protein CLAVATA2 (720 aa).

An N-terminal signal peptide occupies residues 1–25 (MIKIADFTLFFFIFVFSPSLPLAQS). The interval 26–92 (QLPDLDPQDK…LNLSSQIHPS (67 aa)) is N-cap. The Extracellular portion of the chain corresponds to 26-686 (QLPDLDPQDK…QNELVEGPIS (661 aa)). Residues Asn-49, Asn-62, Asn-84, Asn-108, Asn-127, and Asn-168 are each glycosylated (N-linked (GlcNAc...) asparagine). A disulfide bridge links Cys-60 with Cys-68. LRR repeat units lie at residues 96–122 (LSSL…SLRN), 124–144 (RTLN…FVSL), 146–168 (ELRE…WFGN), 170–194 (SMNL…LLYL), 195–217 (KSLK…FQQP), 219–238 (VVLN…FYAS), 239–263 (RPSL…LGSL), 264–287 (KELS…LMFS), 288–311 (EKLV…ISET), 314–338 (KLGL…ITEL), 339–362 (KSLQ…IGNL), 364–386 (YLQV…IVGC), 388–410 (QLLA…LDAL), 411–436 (DSLK…GLKS), 438–458 (EIVD…ITKW), 459–482 (SNLK…LFKF), 484–506 (KIQM…NLNS), 547–571 (LLSM…LFRQ), 573–594 (NIEY…LEKL), 595–617 (PRLK…NISA), and 619–641 (PGLT…KEGL). The N-linked (GlcNAc...) asparagine glycan is linked to Asn-206. Residue Asn-270 is glycosylated (N-linked (GlcNAc...) asparagine). Residue Asn-361 is glycosylated (N-linked (GlcNAc...) asparagine). Residue Asn-398 is glycosylated (N-linked (GlcNAc...) asparagine). Asn-446 is a glycosylation site (N-linked (GlcNAc...) asparagine). N-linked (GlcNAc...) asparagine glycosylation is present at Asn-505. Residues Asn-578, Asn-614, and Asn-625 are each glycosylated (N-linked (GlcNAc...) asparagine). The tract at residues 649–682 (AGNPELCVETPGSKCDPANIDASQEEIYQNELVE) is C-cap/acidic domain. Residues 687–707 (IWIFCLSAFISFDFGVLGIFC) traverse the membrane as a helical segment. Over 708–720 (SARARSYILQTKA) the chain is Cytoplasmic.

The protein belongs to the RLP family. Parts of a tetrameric complex made of two CLV2/CRN heterodimers that can interact with CLV3 and CLE peptides. CLV2/CRN heterodimer interacts with CLV1 homodimers. Interacts with CRN; this dimer can interact with BAM3. Interacts with CLE14. In terms of tissue distribution, mostly expressed in apices (e.g. shoot apical meristem and flower buds), and, to a lower extent, in flowers, leaves, seedlings and siliques. Also expressed in the inner tissues of the proximal root meristem. Expressed throughout the vascular cylinder of root tips.

It localises to the cell membrane. The protein resides in the endoplasmic reticulum membrane. Involved in the perception of CLV3 and CLV3-like (CLE) peptides, that act as extracellular signals regulating meristems maintenance. Required for the sensing of the root CLE peptides (e.g. CLE8, CLE9/CLE10, CLE11, CLE13, CLE14, CLE16, CLE17, CLE18, CLE20, CLE21, CLE25, CLE26, CLE40, CLE41/CLE44 and CLE45), which also involves CRN and leads to root growth regulation, mostly in the phloem and protophloem. Involved in controlling the stem cell population size in shoot and root apical meristems, and during organ development. Promotes the formation of CLV1 multimers. In complex with CRN, perceives secreted CLV3-like effector proteins from plant-parasitic cyst nematodes as ligand mimics of the plant CLE signaling pathway. This recognition is required for proper feeding structure (syncytium) development and ultimately successful nematode infection. CLE14 perception by CLV2/CRN complex triggers root meristem differentiation. This chain is Receptor-like protein CLAVATA2, found in Arabidopsis thaliana (Mouse-ear cress).